The primary structure comprises 1440 residues: ABC transporter G family member 46 (1440 aa).

The interval 1–42 is disordered; that stretch reads MDDDVDAGEIYAVDRQREEGSASAAAFSRSPSTGRVDDDDDD. Positions 21 to 32 are enriched in low complexity; that stretch reads SASAAAFSRSPS. The ABC transporter 1 domain maps to 137–419; it reads ANTLHMTTRS…FKSLGFKCLE (283 aa). 170-177 lines the ATP pocket; the sequence is GSPGSGKT. An ABC transmembrane type-2 1 domain is found at 497–710; the sequence is KILKANIDRE…ALNALAVNEF (214 aa). Transmembrane regions (helical) follow at residues 516 to 536, 561 to 581, 603 to 623, 634 to 654, 659 to 679, 688 to 708, and 745 to 765; these read LYIF…SVFI, AIMF…PVFF, TPIS…VIGF, FLVL…IAAL, VVAS…SGFI, WLIW…LAVN, and IGLG…TICL. The disordered stretch occupies residues 794–829; the sequence is DQEPSSGGRVTNDKRYTEGGNNDEATSSNANHNSSP. Residues 812–829 are compositionally biased toward polar residues; it reads GGNNDEATSSNANHNSSP. One can recognise an ABC transporter 2 domain in the interval 843–1095; that stretch reads MTFEDIRYSI…ELIKYFESIE (253 aa). 888-895 contacts ATP; it reads GISGAGKT. Residues 1168–1382 enclose the ABC transmembrane type-2 2 domain; it reads IQCLACLWKQ…TINGLVTSQF (215 aa). The next 7 membrane-spanning stretches (helical) occupy residues 1188–1208, 1219–1236, 1271–1291, 1302–1322, 1332–1352, 1357–1377, and 1410–1430; these read IAVN…MFWG, LLSA…LGVQ, VVVE…IVYS, FFWY…YGMM, MSSI…GFLI, IPIW…INGL, and LWVA…LFGF.

The protein belongs to the ABC transporter superfamily. ABCG family. PDR (TC 3.A.1.205) subfamily.

Its subcellular location is the membrane. Its function is as follows. May be a general defense protein. The sequence is that of ABC transporter G family member 46 from Oryza sativa subsp. japonica (Rice).